An 852-amino-acid chain; its full sequence is Alanine--tRNA ligase (852 aa).

H554, H558, C656, and H660 together coordinate Zn(2+).

This sequence belongs to the class-II aminoacyl-tRNA synthetase family. Zn(2+) is required as a cofactor.

It is found in the cytoplasm. It carries out the reaction tRNA(Ala) + L-alanine + ATP = L-alanyl-tRNA(Ala) + AMP + diphosphate. Its function is as follows. Catalyzes the attachment of alanine to tRNA(Ala) in a two-step reaction: alanine is first activated by ATP to form Ala-AMP and then transferred to the acceptor end of tRNA(Ala). Also edits incorrectly charged Ser-tRNA(Ala) and Gly-tRNA(Ala) via its editing domain. This chain is Alanine--tRNA ligase, found in Campylobacter concisus (strain 13826).